The sequence spans 448 residues: MQGAKNNIYTVSRLNGEVRQILEGQLGKIWLNGEISNFSSPSSGHWYLTLKDHSSQIRCAMFKGRNQTVSFKPINGQQVLVKGAISVYEPRGDYQLLIESMLPAGDGLLAQQFDALKMKLAAEGLFAADTKRPLPKNIQRIGVITSPTGAAIRDVLHVLARRDPSIEVIIYPTQVQGETAAQSICQAINIANQRLEVDVLLLTRGGGSLEDLWCFNSEALAHTIYNSALPVVSAVGHEVDTTISDYVADIRAPTPSAGAELLSQDSDNKAQKLATALSRLQQSAKHYQLKQERRLSLLEHRLQRQDPKRTLQQFEQRFDEMQLRLESALSNRLHILSRRQQLLASRLEQQSPKHKLAIEGNRLSYLASRLQDALQDKLSQSEQRIQYAAHQLETVSPLATLSRGYSITTDIHNQVADSADKLTIGDSLQTRFRHGQVISTVTQIKLLE.

This sequence belongs to the XseA family. As to quaternary structure, heterooligomer composed of large and small subunits.

The protein resides in the cytoplasm. The enzyme catalyses Exonucleolytic cleavage in either 5'- to 3'- or 3'- to 5'-direction to yield nucleoside 5'-phosphates.. Functionally, bidirectionally degrades single-stranded DNA into large acid-insoluble oligonucleotides, which are then degraded further into small acid-soluble oligonucleotides. The protein is Exodeoxyribonuclease 7 large subunit of Shewanella baltica (strain OS195).